We begin with the raw amino-acid sequence, 772 residues long: Protocadherin beta-6 (772 aa).

The first 28 residues, 1–28 (METTLAKTPEKRQVVFLAILLLLWEAGS), serve as a signal peptide directing secretion. Cadherin domains are found at residues 31–133 (IRYS…SPEF), 134–242 (PDTE…APEF), 243–346 (VQSL…APKL), 347–450 (TISS…APAF), and 451–560 (TQTS…APFI). At 31–690 (IRYSIPEETE…QDEDMLTLYL (660 aa)) the chain is on the extracellular side. Cys96 and Cys102 are oxidised to a cystine. Residue Asn169 is glycosylated (N-linked (GlcNAc...) asparagine). Ser223 is a glycosylation site (O-linked (Man) serine). Residue Thr225 is glycosylated (O-linked (Man) threonine). A glycan (N-linked (GlcNAc...) asparagine) is linked at Asn417. Asn566 carries an N-linked (GlcNAc...) asparagine glycan. A Cadherin 6 domain is found at 575 to 675 (LPRAAEPGYL…SQPYLPLPEV (101 aa)). The chain crosses the membrane as a helical span at residues 691-711 (VIALASVSSLFLLSVLLFVGV). Over 712–772 (RLCRRVREAS…DFKFLNHYSQ (61 aa)) the chain is Cytoplasmic.

Forms homodimers in trans (molecules expressed by two different cells). Forms promiscuous heterodimers in cis (at the plasma membrane of the same cell) with other protocadherins.

The protein localises to the cell membrane. Its function is as follows. Calcium-dependent cell-adhesion protein involved in cells self-recognition and non-self discrimination. Thereby, it is involved in the establishment and maintenance of specific neuronal connections in the brain. The sequence is that of Protocadherin beta-6 from Mus musculus (Mouse).